A 133-amino-acid polypeptide reads, in one-letter code: MKKNITKTIIASTVIAAGLLTQTNDAKAFFSYEWKGLEIAKNLADQAKKDDERIDKLMKESDKNLTPYKAETVNDLYLIVKKLSQGDVKKAVVRIKDDGPRDYYTFDLTRPLEENRKNIKVVKNGEIDSITWY.

Positions 1 to 28 (MKKNITKTIIASTVIAAGLLTQTNDAKA) are cleaved as a signal peptide.

It belongs to the CHIPS/FLIPr family.

The protein localises to the secreted. May be involved in countering the first line of host defense mechanisms. Impairs the leukocyte response to FPRL1 agonists by binding directly to host FPRL1. Exerts, in vitro, anti-inflammatory activity by inhibiting calcium mobilization and cell migration toward chemoattractants. This is FPRL1 inhibitory protein (flr) from Staphylococcus aureus (strain Newman).